A 556-amino-acid chain; its full sequence is MWKWAGVVVMVWSSYGTAICPAWSHAKAEQEIAGLNAQISRWNDAYWQEGKSDVSDEIYDQLNTRLKQWQQCFNHEPATEDIPPANGTLRHPFAHTGVHKVSGKEELRQWMHSRRDLWVQPKVDGVAVTLVYRKGKLVQAISRGDGVKGEDWTARVQAIPSVPLNVKGVLSESVLQGEIFLRCERHIQQQMGGMNARAKVAGMMMRQNNKTVLENLGVFIWAWPDGPQSMPQRLSELTKAGFTLTAQYTRAVSTADEVEKNRKEWLTSSLPFVTDGIVVRSSIEPVGEQWLPGEGDWVVAWKYSPVSQVAEVNAIQFAIGRTGKISVVAVLESIQLDDKRVKRVNLGSVSRWQALDIAPGDQILVSLAGQGIPRVDKVVWRGNDRKKPAPPASQYHSLTCFYASPECLEQFFARLVWLSSKQILNMEGLGDSSWRLLHQTYHFEHIFSWLAVTQEQIEKTSGLNPARRLQLWHRFELARHHPFKKWIKALGIPLPQAAADALSVHSWRQLQDKDAVSWNQLPGIGTEKARKLVEFVHDSQITRLATWLGEQGIDGF.

The active-site N6-AMP-lysine intermediate is the K122.

This sequence belongs to the NAD-dependent DNA ligase family. LigB subfamily.

It catalyses the reaction NAD(+) + (deoxyribonucleotide)n-3'-hydroxyl + 5'-phospho-(deoxyribonucleotide)m = (deoxyribonucleotide)n+m + AMP + beta-nicotinamide D-nucleotide.. In terms of biological role, catalyzes the formation of phosphodiester linkages between 5'-phosphoryl and 3'-hydroxyl groups in double-stranded DNA using NAD as a coenzyme and as the energy source for the reaction. In Enterobacter sp. (strain 638), this protein is DNA ligase B.